Reading from the N-terminus, the 318-residue chain is Aspartate carbamoyltransferase catalytic subunit (318 aa).

Positions 55 and 56 each coordinate carbamoyl phosphate. Residue lysine 83 participates in L-aspartate binding. Arginine 105, histidine 138, and glutamine 141 together coordinate carbamoyl phosphate. L-aspartate-binding residues include arginine 171 and arginine 225. Residues glycine 266 and proline 267 each contribute to the carbamoyl phosphate site.

The protein belongs to the aspartate/ornithine carbamoyltransferase superfamily. ATCase family. Heterododecamer (2C3:3R2) of six catalytic PyrB chains organized as two trimers (C3), and six regulatory PyrI chains organized as three dimers (R2).

The enzyme catalyses carbamoyl phosphate + L-aspartate = N-carbamoyl-L-aspartate + phosphate + H(+). Its pathway is pyrimidine metabolism; UMP biosynthesis via de novo pathway; (S)-dihydroorotate from bicarbonate: step 2/3. In terms of biological role, catalyzes the condensation of carbamoyl phosphate and aspartate to form carbamoyl aspartate and inorganic phosphate, the committed step in the de novo pyrimidine nucleotide biosynthesis pathway. The chain is Aspartate carbamoyltransferase catalytic subunit from Corynebacterium kroppenstedtii (strain DSM 44385 / JCM 11950 / CIP 105744 / CCUG 35717).